A 572-amino-acid polypeptide reads, in one-letter code: 3-ketosteroid oxygenase (572 aa).

The next 2 membrane-spanning stretches (helical) occupy residues 52–72 and 84–104; these read AFAL…RNFL and YFMR…FIRI.

The protein belongs to the cytochrome P450 family. As to expression, expressed in the 2 embryonic head hypodermal cells XXXL/R.

It localises to the membrane. It carries out the reaction 5alpha-cholest-7-en-3-one + 3 reduced [NADPH--hemoprotein reductase] + 3 O2 = (25S)-Delta7-dafachronate + 3 oxidized [NADPH--hemoprotein reductase] + 4 H2O + 4 H(+). The enzyme catalyses cholest-4-en-3-one + 3 reduced [NADPH--hemoprotein reductase] + 3 O2 = (25S)-3-oxocholest-4-en-26-oate + 3 oxidized [NADPH--hemoprotein reductase] + 4 H2O + 4 H(+). It functions in the pathway steroid hormone biosynthesis; dafachronic acid biosynthesis. Functionally, converts the 3-keto steroids 4-cholesten-3-one and lathosterone into the carboxylic metabolites 3-keto-4-cholestenate (Delta(4)-dafachronic acid, Delta(4)-DA) and 3-keto-7,(5a)-cholestenate (Delta(7)-dafachronic acid, Delta(7)-DA) respectively, by catalyzing successive oxidations at C-26. Dafachronic acids bind directly to the nuclear hormone receptor (NHR) DAF-12, suppressing dauer formation and inducing reproductive growth. In a non-cell autonomous manner, negatively regulates body wall muscle arm extensions to motor neurons probably by preventing daf-12 isoform b activation. May be involved in thermotolerance. In Caenorhabditis elegans, this protein is 3-ketosteroid oxygenase (daf-9).